The following is a 239-amino-acid chain: Pyridoxine 5'-phosphate synthase (239 aa).

Asn-7 lines the 3-amino-2-oxopropyl phosphate pocket. Residue 9–10 (DH) participates in 1-deoxy-D-xylulose 5-phosphate binding. Arg-18 contributes to the 3-amino-2-oxopropyl phosphate binding site. His-43 (proton acceptor) is an active-site residue. The 1-deoxy-D-xylulose 5-phosphate site is built by Arg-45 and His-50. Residue Glu-70 is the Proton acceptor of the active site. Thr-100 serves as a coordination point for 1-deoxy-D-xylulose 5-phosphate. The active-site Proton donor is His-191. 3-amino-2-oxopropyl phosphate is bound by residues Gly-192 and 213 to 214 (GH).

The protein belongs to the PNP synthase family. In terms of assembly, homooctamer; tetramer of dimers.

Its subcellular location is the cytoplasm. The enzyme catalyses 3-amino-2-oxopropyl phosphate + 1-deoxy-D-xylulose 5-phosphate = pyridoxine 5'-phosphate + phosphate + 2 H2O + H(+). It functions in the pathway cofactor biosynthesis; pyridoxine 5'-phosphate biosynthesis; pyridoxine 5'-phosphate from D-erythrose 4-phosphate: step 5/5. Its function is as follows. Catalyzes the complicated ring closure reaction between the two acyclic compounds 1-deoxy-D-xylulose-5-phosphate (DXP) and 3-amino-2-oxopropyl phosphate (1-amino-acetone-3-phosphate or AAP) to form pyridoxine 5'-phosphate (PNP) and inorganic phosphate. The protein is Pyridoxine 5'-phosphate synthase of Geotalea uraniireducens (strain Rf4) (Geobacter uraniireducens).